The primary structure comprises 469 residues: Protein HEAT STRESS TOLERANT DWD 1 (469 aa).

The segment covering 1-15 (MGRNVKTKAKRKNKK) has biased composition (basic residues). 2 disordered regions span residues 1–29 (MGRN…SIPT) and 115–150 (DVVP…KTPN). A compositionally biased stretch (acidic residues) spans 124–143 (GEDEDEDDEDDSDSDDDDGD). WD repeat units lie at residues 157–197 (AHHG…NALA), 221–261 (GHKD…WAVD), 267–307 (GHTA…SPAL), 311–351 (AHNA…GGDA), 358–398 (YHKH…DEEE), and 425–464 (QGQK…NTLP).

Belongs to the WD repeat RBAP46/RBAP48/MSI1 family. As to quaternary structure, probable component of CULLIN4 (CUL4) RING ligase (CRL4) complexes. Interacts with DDB1A and DDB1B. Associates with HSP90-1.

It participates in protein modification; protein ubiquitination. Its function is as follows. Probable substrate receptor of CRL4 E3 ligase complexes acting as negative regulators of thermotolerance by disturbing the action of HSP90-1 and by preventing the expression of heat-inducible genes (e.g. HSP14.7, HSP21, At2g03020 and WRKY28). This Arabidopsis thaliana (Mouse-ear cress) protein is Protein HEAT STRESS TOLERANT DWD 1.